A 638-amino-acid polypeptide reads, in one-letter code: 1-deoxy-D-xylulose-5-phosphate synthase (638 aa).

Thiamine diphosphate is bound by residues His-75 and 116 to 118; that span reads AHS. Asp-147 is a binding site for Mg(2+). Residues 148-149, Asn-177, Tyr-288, and Glu-370 contribute to the thiamine diphosphate site; that span reads GA. Asn-177 contributes to the Mg(2+) binding site.

This sequence belongs to the transketolase family. DXPS subfamily. Homodimer. The cofactor is Mg(2+). Requires thiamine diphosphate as cofactor.

It carries out the reaction D-glyceraldehyde 3-phosphate + pyruvate + H(+) = 1-deoxy-D-xylulose 5-phosphate + CO2. It participates in metabolic intermediate biosynthesis; 1-deoxy-D-xylulose 5-phosphate biosynthesis; 1-deoxy-D-xylulose 5-phosphate from D-glyceraldehyde 3-phosphate and pyruvate: step 1/1. Functionally, catalyzes the acyloin condensation reaction between C atoms 2 and 3 of pyruvate and glyceraldehyde 3-phosphate to yield 1-deoxy-D-xylulose-5-phosphate (DXP). The protein is 1-deoxy-D-xylulose-5-phosphate synthase of Cupriavidus necator (strain ATCC 17699 / DSM 428 / KCTC 22496 / NCIMB 10442 / H16 / Stanier 337) (Ralstonia eutropha).